The following is a 174-amino-acid chain: NADH-ubiquinone oxidoreductase chain 6 (174 aa).

6 helical membrane passes run 1 to 21 (MTYV…GFSS), 24 to 44 (SPIY…TIIL), 47 to 67 (GGGY…MVVF), 86 to 106 (VEVL…VLWV), 111 to 131 (GVVV…EGEG), and 151 to 171 (WLVV…IEIA).

The protein belongs to the complex I subunit 6 family. In terms of assembly, core subunit of respiratory chain NADH dehydrogenase (Complex I) which is composed of 45 different subunits.

The protein localises to the mitochondrion inner membrane. It carries out the reaction a ubiquinone + NADH + 5 H(+)(in) = a ubiquinol + NAD(+) + 4 H(+)(out). Its function is as follows. Core subunit of the mitochondrial membrane respiratory chain NADH dehydrogenase (Complex I) which catalyzes electron transfer from NADH through the respiratory chain, using ubiquinone as an electron acceptor. Essential for the catalytic activity and assembly of complex I. The sequence is that of NADH-ubiquinone oxidoreductase chain 6 (MT-ND6) from Pan paniscus (Pygmy chimpanzee).